The chain runs to 475 residues: Aspartyl/glutamyl-tRNA(Asn/Gln) amidotransferase subunit B (475 aa).

The protein belongs to the GatB/GatE family. GatB subfamily. As to quaternary structure, heterotrimer of A, B and C subunits.

It carries out the reaction L-glutamyl-tRNA(Gln) + L-glutamine + ATP + H2O = L-glutaminyl-tRNA(Gln) + L-glutamate + ADP + phosphate + H(+). The enzyme catalyses L-aspartyl-tRNA(Asn) + L-glutamine + ATP + H2O = L-asparaginyl-tRNA(Asn) + L-glutamate + ADP + phosphate + 2 H(+). Functionally, allows the formation of correctly charged Asn-tRNA(Asn) or Gln-tRNA(Gln) through the transamidation of misacylated Asp-tRNA(Asn) or Glu-tRNA(Gln) in organisms which lack either or both of asparaginyl-tRNA or glutaminyl-tRNA synthetases. The reaction takes place in the presence of glutamine and ATP through an activated phospho-Asp-tRNA(Asn) or phospho-Glu-tRNA(Gln). The chain is Aspartyl/glutamyl-tRNA(Asn/Gln) amidotransferase subunit B from Pelodictyon phaeoclathratiforme (strain DSM 5477 / BU-1).